We begin with the raw amino-acid sequence, 459 residues long: MDQSNRYADLSLTEAELIAGGQHILCAYKMKPKAGHRYLEAAAHFAAESSTGTNVEVCTTDEFTKGVDALVYHIDEASEDMRIAYPLDLFDRNMTDGRMMMASFLTLTIGNNQGMGDIEHAKMVDFYVPRRGIELFDGPSKDISDLWRMLGRPVKDGGYIAGTIIKPKLGLRPEPFARAAYEFWLGGDFIKNDEPQGNQVFAPLKKVIPLVYDSMKRAMDETGEAKLFSMNITADDHFEMCARADFALEAFGPDADKLAFLVDGYVGGPGMITTARRQYPNQYLHYHRAGHGAVTSPSSKRGYTAYVLAKMSRLQGASGIHVGTMGYGKMEGDKDDRACAYIIERDSYTGPVYHQEWYGMKPTTPIISGGMNALRLPGFFENLGHGNVINTAGGGAYGHIDSPAAGARSLRQAYDCWKAGADPVEWARDHYEFARAFESFPQDADQLYPGWRHKLRPAA.

Residue asparagine 111 coordinates substrate. The active-site Proton acceptor is the lysine 166. Position 168 (lysine 168) interacts with substrate. The Mg(2+) site is built by lysine 191, aspartate 193, and glutamate 194. Position 191 is an N6-carboxylysine (lysine 191). The active-site Proton acceptor is histidine 287. The substrate site is built by arginine 288, histidine 321, and serine 368.

The protein belongs to the RuBisCO large chain family. Type II subfamily. In terms of assembly, homodimer. Requires Mg(2+) as cofactor.

The enzyme catalyses 2 (2R)-3-phosphoglycerate + 2 H(+) = D-ribulose 1,5-bisphosphate + CO2 + H2O. It carries out the reaction D-ribulose 1,5-bisphosphate + O2 = 2-phosphoglycolate + (2R)-3-phosphoglycerate + 2 H(+). In terms of biological role, ruBisCO catalyzes two reactions: the carboxylation of D-ribulose 1,5-bisphosphate, the primary event in carbon dioxide fixation, as well as the oxidative fragmentation of the pentose substrate. Both reactions occur simultaneously and in competition at the same active site. The sequence is that of Ribulose bisphosphate carboxylase from Dechloromonas aromatica (strain RCB).